We begin with the raw amino-acid sequence, 620 residues long: Protein translocase subunit SecD (620 aa).

6 consecutive transmembrane segments (helical) span residues 10-30, 464-484, 488-507, 511-533, 555-575, and 582-602; these read YLLI…NLYP, LWGM…FGVI, ALAF…GATL, GIAG…FSRI, FTAI…LYAM, and GFAV…IMVT.

Belongs to the SecD/SecF family. SecD subfamily. As to quaternary structure, forms a complex with SecF. Part of the essential Sec protein translocation apparatus which comprises SecA, SecYEG and auxiliary proteins SecDF-YajC and YidC.

Its subcellular location is the cell inner membrane. Part of the Sec protein translocase complex. Interacts with the SecYEG preprotein conducting channel. SecDF uses the proton motive force (PMF) to complete protein translocation after the ATP-dependent function of SecA. The polypeptide is Protein translocase subunit SecD (Pseudomonas aeruginosa (strain ATCC 15692 / DSM 22644 / CIP 104116 / JCM 14847 / LMG 12228 / 1C / PRS 101 / PAO1)).